The sequence spans 434 residues: MSILKIHAREIFDSRGNPTVEVDLYTSKGLFRAAVPSGASTGIYEALELRDNDKTRFMGKGVSKAVAHVNKTIAPALISKNISVVEQEKIDRLMLEMDGSENKSKFGANAILGVSLAVCKAGAAEKGVPLYRHIADLAGNPEVILPVPAFNVINGGSHAGNKLAMQEFMILPVGAESFKEAMRIGAEVYHNLKNVIKEKYGKDATNVGDEGGFAPNILENKEALELLKNAINKAGYSDKIVIGMDVAASEFYRDGKYDLDFKSPDDPSRYITPDQLADLYKSFVKNYPVVSIEDPFDQDDWAAWKKFTASVGIQVVGDDLTVTNPKRIAKAVDDKACNCLLLKVNQIGSVTESLQACKLAQSNGWGVMVSHRSGETEDTFIADLVVGLCTGQIKTGAPCRSERLAKYNQILRIEEELGSKARFAGRNFRNPRIN.

Residue Ser40 coordinates Mg(2+). Positions 158 and 167 each coordinate substrate. The Proton donor role is filled by Glu210. Mg(2+) is bound by residues Asp245, Glu293, and Asp318. Substrate-binding residues include Glu293 and Asp318. The Proton acceptor role is filled by Lys343. Substrate contacts are provided by residues 370-373 (SHRS) and Lys394.

Belongs to the enolase family. In terms of assembly, homodimer. Requires Mg(2+) as cofactor.

The protein localises to the cytoplasm. The enzyme catalyses (2R)-2-phosphoglycerate = phosphoenolpyruvate + H2O. It functions in the pathway carbohydrate degradation; glycolysis; pyruvate from D-glyceraldehyde 3-phosphate: step 4/5. This chain is Alpha-enolase, found in Alligator mississippiensis (American alligator).